Consider the following 497-residue polypeptide: UDP-N-acetylmuramoyl-L-alanyl-D-glutamate--2,6-diaminopimelate ligase (497 aa).

UDP-N-acetyl-alpha-D-muramoyl-L-alanyl-D-glutamate is bound at residue Ser32. ATP is bound at residue 113–119; it reads GTNGKTT. UDP-N-acetyl-alpha-D-muramoyl-L-alanyl-D-glutamate-binding positions include 155 to 156, Ser182, Gln188, and Arg190; that span reads TT. Residue Lys222 is modified to N6-carboxylysine. Residues Arg385, 409–412, Gly460, and Glu464 each bind meso-2,6-diaminopimelate; that span reads DNPR. The Meso-diaminopimelate recognition motif signature appears at 409–412; it reads DNPR.

This sequence belongs to the MurCDEF family. MurE subfamily. It depends on Mg(2+) as a cofactor. Carboxylation is probably crucial for Mg(2+) binding and, consequently, for the gamma-phosphate positioning of ATP.

The protein localises to the cytoplasm. It catalyses the reaction UDP-N-acetyl-alpha-D-muramoyl-L-alanyl-D-glutamate + meso-2,6-diaminopimelate + ATP = UDP-N-acetyl-alpha-D-muramoyl-L-alanyl-gamma-D-glutamyl-meso-2,6-diaminopimelate + ADP + phosphate + H(+). The protein operates within cell wall biogenesis; peptidoglycan biosynthesis. Catalyzes the addition of meso-diaminopimelic acid to the nucleotide precursor UDP-N-acetylmuramoyl-L-alanyl-D-glutamate (UMAG) in the biosynthesis of bacterial cell-wall peptidoglycan. The protein is UDP-N-acetylmuramoyl-L-alanyl-D-glutamate--2,6-diaminopimelate ligase of Thermosynechococcus vestitus (strain NIES-2133 / IAM M-273 / BP-1).